Here is a 455-residue protein sequence, read N- to C-terminus: Probable glycine dehydrogenase (decarboxylating) subunit 1 (455 aa).

This sequence belongs to the GcvP family. N-terminal subunit subfamily. As to quaternary structure, the glycine cleavage system is composed of four proteins: P, T, L and H. In this organism, the P 'protein' is a heterodimer of two subunits.

The enzyme catalyses N(6)-[(R)-lipoyl]-L-lysyl-[glycine-cleavage complex H protein] + glycine + H(+) = N(6)-[(R)-S(8)-aminomethyldihydrolipoyl]-L-lysyl-[glycine-cleavage complex H protein] + CO2. The glycine cleavage system catalyzes the degradation of glycine. The P protein binds the alpha-amino group of glycine through its pyridoxal phosphate cofactor; CO(2) is released and the remaining methylamine moiety is then transferred to the lipoamide cofactor of the H protein. In Saccharolobus islandicus (strain Y.G.57.14 / Yellowstone #1) (Sulfolobus islandicus), this protein is Probable glycine dehydrogenase (decarboxylating) subunit 1.